We begin with the raw amino-acid sequence, 114 residues long: T cell receptor beta variable 4-3 (114 aa).

The N-terminal stretch at 1-21 (MGCRLLCCAVLCLLGAVPMET) is a signal peptide. In terms of domain architecture, Ig-like spans 22-114 (GVTQTPRHLV…SALYLCASSQ (93 aa)). Cysteines 42 and 110 form a disulfide. N-linked (GlcNAc...) asparagine glycans are attached at residues Asn76 and Asn89.

Alpha-beta TR is a heterodimer composed of an alpha and beta chain; disulfide-linked. The alpha-beta TR is associated with the transmembrane signaling CD3 coreceptor proteins to form the TR-CD3 (TcR or TCR). The assembly of alpha-beta TR heterodimers with CD3 occurs in the endoplasmic reticulum where a single alpha-beta TR heterodimer associates with one CD3D-CD3E heterodimer, one CD3G-CD3E heterodimer and one CD247 homodimer forming a stable octameric structure. CD3D-CD3E and CD3G-CD3E heterodimers preferentially associate with TR alpha and TR beta chains, respectively. The association of the CD247 homodimer is the last step of TcR assembly in the endoplasmic reticulum and is required for transport to the cell surface.

It is found in the cell membrane. Functionally, v region of the variable domain of T cell receptor (TR) beta chain that participates in the antigen recognition. Alpha-beta T cell receptors are antigen specific receptors which are essential to the immune response and are present on the cell surface of T lymphocytes. Recognize peptide-major histocompatibility (MH) (pMH) complexes that are displayed by antigen presenting cells (APC), a prerequisite for efficient T cell adaptive immunity against pathogens. Binding of alpha-beta TR to pMH complex initiates TR-CD3 clustering on the cell surface and intracellular activation of LCK that phosphorylates the ITAM motifs of CD3G, CD3D, CD3E and CD247 enabling the recruitment of ZAP70. In turn ZAP70 phosphorylates LAT, which recruits numerous signaling molecules to form the LAT signalosome. The LAT signalosome propagates signal branching to three major signaling pathways, the calcium, the mitogen-activated protein kinase (MAPK) kinase and the nuclear factor NF-kappa-B (NF-kB) pathways, leading to the mobilization of transcription factors that are critical for gene expression and essential for T cell growth and differentiation. The T cell repertoire is generated in the thymus, by V-(D)-J rearrangement. This repertoire is then shaped by intrathymic selection events to generate a peripheral T cell pool of self-MH restricted, non-autoaggressive T cells. Post-thymic interaction of alpha-beta TR with the pMH complexes shapes TR structural and functional avidity. This Homo sapiens (Human) protein is T cell receptor beta variable 4-3.